The chain runs to 144 residues: Small ribosomal subunit protein eS10A (144 aa).

The tract at residues T90–Q144 is disordered. The segment covering G103–G126 has biased composition (basic and acidic residues).

The protein belongs to the eukaryotic ribosomal protein eS10 family. In terms of assembly, component of the small ribosomal subunit (SSU). Mature yeast ribosomes consist of a small (40S) and a large (60S) subunit. The 40S small subunit contains 1 molecule of ribosomal RNA (18S rRNA) and at least 33 different proteins. The large 60S subunit contains 3 rRNA molecules (25S, 5.8S and 5S rRNA) and at least 46 different proteins. eS10 interacts with GCN1 (via middle region); this interaction is direct and promotes GCN2 kinase activity.

Its subcellular location is the cytoplasm. Functionally, component of the ribosome, a large ribonucleoprotein complex responsible for the synthesis of proteins in the cell. The small ribosomal subunit (SSU) binds messenger RNAs (mRNAs) and translates the encoded message by selecting cognate aminoacyl-transfer RNA (tRNA) molecules. The large subunit (LSU) contains the ribosomal catalytic site termed the peptidyl transferase center (PTC), which catalyzes the formation of peptide bonds, thereby polymerizing the amino acids delivered by tRNAs into a polypeptide chain. The nascent polypeptides leave the ribosome through a tunnel in the LSU and interact with protein factors that function in enzymatic processing, targeting, and the membrane insertion of nascent chains at the exit of the ribosomal tunnel. eS10 plays a role as a positive regulator of the GCN2 kinase activity by stimulating GCN1-mediated GCN2 activation. The sequence is that of Small ribosomal subunit protein eS10A (rps1001) from Schizosaccharomyces pombe (strain 972 / ATCC 24843) (Fission yeast).